A 376-amino-acid chain; its full sequence is MLPLSIKDDEYKPPKFNLFRKISGWFRSILSDKTSRNLFFFLCLNLSFAFVELLYGIWSNCLGLISDSFHMFFDSTAILAGLAASVISKWRDNDAFSYGYVRAEVLAGFVNGLFLIFTAFFIFSEGVERALAPPDVHHERLLLVSILGFVVNLVGIFVFKHGGHGHSHGSGHGHSHSLFNGALDQTHGHGDHCHSHELKHGAAHSHDHAHGHGHFHSHDGPSLKETTGPSRQILQGVFLHILADTLGSIGVIASAIMMQNFGLMIADPICSILIAMLIVISVIPLLRESVGILMQRTPPLLENTLPQCYQRVQQLQGVYSLQEQHFWTLCSDVYVGTLKLVVAPDADARWILSQTHNIFTQAGVRQLYVQIDFAAM.

The Cytoplasmic segment spans residues 1 to 37; that stretch reads MLPLSIKDDEYKPPKFNLFRKISGWFRSILSDKTSRN. The helical transmembrane segment at 38–58 threads the bilayer; that stretch reads LFFFLCLNLSFAFVELLYGIW. The Lumenal portion of the chain corresponds to 59 to 67; the sequence is SNCLGLISD. The helical transmembrane segment at 68 to 88 threads the bilayer; sequence SFHMFFDSTAILAGLAASVIS. Topologically, residues 89 to 102 are cytoplasmic; sequence KWRDNDAFSYGYVR. The chain crosses the membrane as a helical span at residues 103–123; it reads AEVLAGFVNGLFLIFTAFFIF. Over 124–140 the chain is Lumenal; sequence SEGVERALAPPDVHHER. The chain crosses the membrane as a helical span at residues 141–161; it reads LLLVSILGFVVNLVGIFVFKH. The tract at residues 161-218 is his-rich loop; it reads HGGHGHSHGSGHGHSHSLFNGALDQTHGHGDHCHSHELKHGAAHSHDHAHGHGHFHSH. The Cytoplasmic segment spans residues 162-236; it reads GGHGHSHGSG…TGPSRQILQG (75 aa). Residues 188 to 222 show a composition bias toward basic and acidic residues; it reads GHGDHCHSHELKHGAAHSHDHAHGHGHFHSHDGPS. The interval 188–226 is disordered; it reads GHGDHCHSHELKHGAAHSHDHAHGHGHFHSHDGPSLKET. The chain crosses the membrane as a helical span at residues 237 to 257; sequence VFLHILADTLGSIGVIASAIM. Topologically, residues 258–262 are lumenal; sequence MQNFG. The chain crosses the membrane as a helical span at residues 263–283; sequence LMIADPICSILIAMLIVISVI. Residues 284 to 376 lie on the Cytoplasmic side of the membrane; the sequence is PLLRESVGIL…LYVQIDFAAM (93 aa).

It belongs to the cation diffusion facilitator (CDF) transporter (TC 2.A.4) family. SLC30A subfamily. Homooligomer.

The protein resides in the golgi apparatus membrane. It localises to the cytoplasmic vesicle. The protein localises to the golgi apparatus. Its subcellular location is the trans-Golgi network. It is found in the sarcoplasmic reticulum. The protein resides in the mitochondrion. It catalyses the reaction Zn(2+)(in) = Zn(2+)(out). In terms of biological role, zinc ion transporter mediating zinc entry from the cytosol into the lumen of organelles along the secretory pathway. By contributing to zinc ion homeostasis within the early secretory pathway, regulates the activation and folding of enzymes like alkaline phosphatases. The chain is Zinc transporter 7 (SLC30A7) from Bos taurus (Bovine).